Reading from the N-terminus, the 172-residue chain is Shikimate kinase 2 (172 aa).

9–16 (GARAAGKT) contacts ATP.

Belongs to the shikimate kinase family.

Its subcellular location is the cytoplasm. It carries out the reaction shikimate + ATP = 3-phosphoshikimate + ADP + H(+). The protein operates within metabolic intermediate biosynthesis; chorismate biosynthesis; chorismate from D-erythrose 4-phosphate and phosphoenolpyruvate: step 5/7. The protein is Shikimate kinase 2 of Syntrophotalea carbinolica (strain DSM 2380 / NBRC 103641 / GraBd1) (Pelobacter carbinolicus).